Consider the following 926-residue polypeptide: Ubiquitin carboxyl-terminal hydrolase 4 (926 aa).

The Rhodanese domain maps to 205 to 328; sequence SQMEILLIDI…WLKSNYGRQV (124 aa). Ser-443 bears the Phosphoserine mark. Positions 562 to 923 constitute a USP domain; that stretch reads VGLENLGNSC…NAYVLFYHRV (362 aa). Cys-571 (nucleophile) is an active-site residue. The Proton acceptor role is filled by His-880.

The protein belongs to the peptidase C19 family. As to quaternary structure, interacts with BRO1, RFU1 and VPS32. Associates with the 26S proteasome.

It is found in the cytoplasm. Its subcellular location is the late endosome membrane. It carries out the reaction Thiol-dependent hydrolysis of ester, thioester, amide, peptide and isopeptide bonds formed by the C-terminal Gly of ubiquitin (a 76-residue protein attached to proteins as an intracellular targeting signal).. Its activity is regulated as follows. RFU1 is an inhibitor of deubiquitination activity. Ubiquitin thioesterase that acts at the late endosome/prevacuolar compartment to recover ubiquitin from ubiquitinated membrane proteins en route to the vacuole. Also removes ubiquitin from soluble proteins targeted to proteasomes. Is essential to maintain a normal level of free ubiquitin. Involved in the ammonium-induced down-regulation of the GAP1 permease and the UME3 destruction in response to oxidative stress. Has a role in the RAD9 checkpoint response to TOP1 poisons. Required for promoting coordination of DNA replication and avoids DNA overreplication. This Saccharomyces cerevisiae (strain RM11-1a) (Baker's yeast) protein is Ubiquitin carboxyl-terminal hydrolase 4 (DOA4).